We begin with the raw amino-acid sequence, 346 residues long: Tetraacyldisaccharide 4'-kinase (346 aa).

Residue T54–T61 participates in ATP binding.

It belongs to the LpxK family.

It carries out the reaction a lipid A disaccharide + ATP = a lipid IVA + ADP + H(+). Its pathway is glycolipid biosynthesis; lipid IV(A) biosynthesis; lipid IV(A) from (3R)-3-hydroxytetradecanoyl-[acyl-carrier-protein] and UDP-N-acetyl-alpha-D-glucosamine: step 6/6. Functionally, transfers the gamma-phosphate of ATP to the 4'-position of a tetraacyldisaccharide 1-phosphate intermediate (termed DS-1-P) to form tetraacyldisaccharide 1,4'-bis-phosphate (lipid IVA). The chain is Tetraacyldisaccharide 4'-kinase from Sinorhizobium fredii (strain NBRC 101917 / NGR234).